Here is a 568-residue protein sequence, read N- to C-terminus: bZIP transcription factor 60 (568 aa).

Composition is skewed to low complexity over residues 1 to 13 and 60 to 78; these read MAEPDLLAPFADL and TTSSSSSAAGSPEAGTSSA. Disordered regions lie at residues 1–29 and 45–134; these read MAEPDLLAPFADLPFPPGDDFPDFPTLGD and DFDV…RKKQ. Residues 1 to 240 lie on the Cytoplasmic side of the membrane; it reads MAEPDLLAPF…PAKKARKTKK (240 aa). The span at 103–113 shows a compositional bias: basic and acidic residues; that stretch reads GGKDGKDDEAK. In terms of domain architecture, bZIP spans 111–171; sequence EAKRRARLVR…AENAALKQQL (61 aa). A basic motif region spans residues 113–144; the sequence is KRRARLVRNRESAHQSRQRKKQYVEELEGKVK. The leucine-zipper stretch occupies residues 150 to 157; the sequence is IADLTARI. Residues 241–261 traverse the membrane as a helical segment; sequence VAGVSLLGLLFLMMVCGCLVP. The Lumenal portion of the chain corresponds to 262 to 568; it reads AVNRMYGAAY…LPFKSHSPHL (307 aa). 5 N-linked (GlcNAc...) asparagine glycosylation sites follow: Asn-307, Asn-452, Asn-456, Asn-488, and Asn-499. Residues 479–510 are disordered; it reads AIPLRGSTSNDTDHFKAPPKNHSQSHAGRKPV.

Belongs to the bZIP family.

The protein resides in the endoplasmic reticulum membrane. It is found in the nucleus. Functionally, transcription factor involved in endoplasmic reticulum (ER) stress response. Acts as a ER stress sensor and activates the transcription factor BZIP50 and the chaperone BIP1. This Oryza sativa subsp. japonica (Rice) protein is bZIP transcription factor 60.